We begin with the raw amino-acid sequence, 147 residues long: Nucleoside diphosphate kinase (147 aa).

ATP is bound by residues Lys9, Phe57, Arg85, Thr91, Arg102, and Asn112. His115 functions as the Pros-phosphohistidine intermediate in the catalytic mechanism.

The protein belongs to the NDK family. In terms of assembly, homotetramer. Mg(2+) is required as a cofactor.

It localises to the cytoplasm. The enzyme catalyses a 2'-deoxyribonucleoside 5'-diphosphate + ATP = a 2'-deoxyribonucleoside 5'-triphosphate + ADP. It catalyses the reaction a ribonucleoside 5'-diphosphate + ATP = a ribonucleoside 5'-triphosphate + ADP. In terms of biological role, major role in the synthesis of nucleoside triphosphates other than ATP. The ATP gamma phosphate is transferred to the NDP beta phosphate via a ping-pong mechanism, using a phosphorylated active-site intermediate. This chain is Nucleoside diphosphate kinase, found in Listeria welshimeri serovar 6b (strain ATCC 35897 / DSM 20650 / CCUG 15529 / CIP 8149 / NCTC 11857 / SLCC 5334 / V8).